The chain runs to 135 residues: Ribosome-binding factor A (135 aa).

Belongs to the RbfA family. In terms of assembly, monomer. Binds 30S ribosomal subunits, but not 50S ribosomal subunits or 70S ribosomes.

It is found in the cytoplasm. Its function is as follows. One of several proteins that assist in the late maturation steps of the functional core of the 30S ribosomal subunit. Associates with free 30S ribosomal subunits (but not with 30S subunits that are part of 70S ribosomes or polysomes). Required for efficient processing of 16S rRNA. May interact with the 5'-terminal helix region of 16S rRNA. This is Ribosome-binding factor A from Aliivibrio fischeri (strain ATCC 700601 / ES114) (Vibrio fischeri).